The sequence spans 590 residues: Aspartate--tRNA(Asp/Asn) ligase (590 aa).

L-aspartate is bound at residue E172. Residues 196 to 199 (QLFK) form an aspartate region. An L-aspartate-binding site is contributed by R218. ATP contacts are provided by residues 218–220 (RDE) and Q227. H449 provides a ligand contact to L-aspartate. Residue E484 coordinates ATP. R491 is an L-aspartate binding site. Residue 536–539 (GVDR) participates in ATP binding.

It belongs to the class-II aminoacyl-tRNA synthetase family. Type 1 subfamily. In terms of assembly, homodimer.

The protein localises to the cytoplasm. It carries out the reaction tRNA(Asx) + L-aspartate + ATP = L-aspartyl-tRNA(Asx) + AMP + diphosphate. Functionally, aspartyl-tRNA synthetase with relaxed tRNA specificity since it is able to aspartylate not only its cognate tRNA(Asp) but also tRNA(Asn). Reaction proceeds in two steps: L-aspartate is first activated by ATP to form Asp-AMP and then transferred to the acceptor end of tRNA(Asp/Asn). The chain is Aspartate--tRNA(Asp/Asn) ligase from Francisella tularensis subsp. holarctica (strain FTNF002-00 / FTA).